The following is a 132-amino-acid chain: Small ribosomal subunit protein uS8 (132 aa).

This sequence belongs to the universal ribosomal protein uS8 family. In terms of assembly, part of the 30S ribosomal subunit. Contacts proteins S5 and S12.

Functionally, one of the primary rRNA binding proteins, it binds directly to 16S rRNA central domain where it helps coordinate assembly of the platform of the 30S subunit. This is Small ribosomal subunit protein uS8 from Streptococcus agalactiae serotype V (strain ATCC BAA-611 / 2603 V/R).